Consider the following 688-residue polypeptide: G protein-coupled receptor kinase 3 (688 aa).

Residues Met1–Asp190 are N-terminal. The RGS domain occupies Thr54–Cys175. The Protein kinase domain maps to Phe191–Phe453. ATP contacts are provided by residues Ile197–Val205 and Lys220. Asp317 serves as the catalytic Proton acceptor. Residues Lys454–Val521 form the AGC-kinase C-terminal domain. A PH domain is found at Asp558–Asn652.

It belongs to the protein kinase superfamily. AGC Ser/Thr protein kinase family. GPRK subfamily. Interacts with GIT1. Post-translationally, ubiquitinated.

The protein resides in the postsynapse. The protein localises to the presynapse. It carries out the reaction [beta-adrenergic receptor] + ATP = [beta-adrenergic receptor]-phosphate + ADP + H(+). Specifically phosphorylates the agonist-occupied form of the beta-adrenergic and closely related receptors. In Mus musculus (Mouse), this protein is G protein-coupled receptor kinase 3.